Reading from the N-terminus, the 325-residue chain is uncharacterized protein (325 aa).

The chain crosses the membrane as a helical span at residues 67 to 87 (WIPFFLLFSSVVVLGGLWWLG).

Its subcellular location is the membrane. This is an uncharacterized protein from Synechocystis sp. (strain ATCC 27184 / PCC 6803 / Kazusa).